Consider the following 120-residue polypeptide: Ribosome-binding factor A (120 aa).

The protein belongs to the RbfA family. As to quaternary structure, monomer. Binds 30S ribosomal subunits, but not 50S ribosomal subunits or 70S ribosomes.

It localises to the cytoplasm. In terms of biological role, one of several proteins that assist in the late maturation steps of the functional core of the 30S ribosomal subunit. Associates with free 30S ribosomal subunits (but not with 30S subunits that are part of 70S ribosomes or polysomes). Required for efficient processing of 16S rRNA. May interact with the 5'-terminal helix region of 16S rRNA. The sequence is that of Ribosome-binding factor A from Chlamydia abortus (strain DSM 27085 / S26/3) (Chlamydophila abortus).